The following is a 1925-amino-acid chain: Plexin-D1 (1925 aa).

Residues 1 to 18 (MAPRAAGGAPLSARAAAA) show a composition bias toward low complexity. The tract at residues 1–23 (MAPRAAGGAPLSARAAAASPPPF) is disordered. A signal peptide spans 1 to 46 (MAPRAAGGAPLSARAAAASPPPFQTPPRCPVPLLLLLLLGAARAGA). The 500-residue stretch at 47 to 546 (LEIQRRFPSP…TSHQMARVKV (500 aa)) folds into the Sema domain. The Extracellular segment spans residues 47–1271 (LEIQRRFPSP…TLQLGGSETA (1225 aa)). Asn86 is a glycosylation site (N-linked (GlcNAc...) asparagine). Disulfide bonds link Cys104/Cys114 and Cys140/Cys148. Asn155, Asn188, and Asn224 each carry an N-linked (GlcNAc...) asparagine glycan. Cystine bridges form between Cys322-Cys445 and Cys345-Cys389. 2 N-linked (GlcNAc...) asparagine glycosylation sites follow: Asn481 and Asn500. 5 cysteine pairs are disulfide-bonded: Cys549–Cys566, Cys555–Cys600, Cys558–Cys575, Cys569–Cys581, and Cys637–Cys661. N-linked (GlcNAc...) asparagine glycosylation occurs at Asn583. N-linked (GlcNAc...) asparagine glycosylation is found at Asn696, Asn736, Asn802, Asn965, Asn1017, Asn1060, Asn1099, Asn1118, Asn1132, Asn1237, and Asn1257. 3 IPT/TIG domains span residues 891–979 (PEIH…FSYV), 981–1066 (PLVH…FWYM), and 1069–1160 (PVIT…LDPE). The helical transmembrane segment at 1272-1292 (IIVSIVICSVLLLLSVVALFV) threads the bilayer. At 1293–1925 (FCTKSRRAER…DNIYECYSEA (633 aa)) the chain is on the cytoplasmic side.

Belongs to the plexin family. As to quaternary structure, interacts with NRP1 and SEMA4A. Interacts with SH3BP1; they dissociate upon SEMA3E binding to PLXND1 allowing SH3BP1 to transduce downstream signal through RAC1 inactivation. Detected at low levels in heart, placenta, lung, skeletal muscle, kidney, thymus and liver. Detected at very low levels in brain, colon, spleen, small intestine and peripheral blood leukocytes.

The protein resides in the cell membrane. The protein localises to the cell projection. Its subcellular location is the lamellipodium membrane. In terms of biological role, cell surface receptor for SEMA4A and for class 3 semaphorins, such as SEMA3A, SEMA3C and SEMA3E. Plays an important role in cell-cell signaling, and in regulating the migration of a wide spectrum of cell types. Regulates the migration of thymocytes in the medulla. Regulates endothelial cell migration. Plays an important role in ensuring the specificity of synapse formation. Required for normal development of the heart and vasculature. Mediates anti-angiogenic signaling in response to SEMA3E. In Homo sapiens (Human), this protein is Plexin-D1 (PLXND1).